Here is a 330-residue protein sequence, read N- to C-terminus: 5'-AMP-activated protein kinase subunit gamma-1 (330 aa).

The segment at methionine 1–serine 24 is disordered. 3 CBS domains span residues proline 43–leucine 103, serine 125–glutamate 187, and isoleucine 198–valine 260. Residues arginine 70, methionine 85–aspartate 90, valine 130, histidine 151–arginine 152, and lysine 170 each bind ADP. AMP is bound by residues arginine 70, methionine 85–aspartate 90, valine 130, histidine 151, histidine 151–arginine 152, lysine 170, threonine 200, alanine 205, serine 226–alanine 227, and serine 242–aspartate 245. Residues arginine 70, methionine 85–aspartate 90, valine 130, histidine 151–arginine 152, arginine 152, and lysine 170 contribute to the ATP site. The AMPK pseudosubstrate signature appears at leucine 138 to glutamate 159. Position 242–245 (serine 242–aspartate 245) interacts with ADP. Serine 242–aspartate 245 serves as a coordination point for ATP. Serine 261 bears the Phosphoserine; by ULK1 mark. A Phosphothreonine; by ULK1 modification is found at threonine 263. An ADP-binding site is contributed by arginine 269. Arginine 269 lines the AMP pocket. An ATP-binding site is contributed by arginine 269. The residue at position 270 (serine 270) is a Phosphoserine; by ULK1. In terms of domain architecture, CBS 4 spans tyrosine 272–lysine 329. Residues leucine 277 and histidine 298–arginine 299 contribute to the ADP site. AMP is bound by residues leucine 277, histidine 298, histidine 298–arginine 299, and serine 314–aspartate 317. Residues leucine 277 and histidine 298–arginine 299 contribute to the ATP site.

Belongs to the 5'-AMP-activated protein kinase gamma subunit family. As to quaternary structure, AMPK is a heterotrimer of an alpha catalytic subunit (PRKAA1 or PRKAA2), a beta (PRKAB1 or PRKAB2) and a gamma non-catalytic subunits (PRKAG1, PRKAG2 or PRKAG3). Interacts with FNIP1 and FNIP2. Post-translationally, phosphorylated by ULK1 and ULK2; leading to negatively regulate AMPK activity and suggesting the existence of a regulatory feedback loop between ULK1, ULK2 and AMPK. Glycosylated; O-GlcNAcylated by OGT, promoting the AMP-activated protein kinase (AMPK) activity.

Functionally, AMP/ATP-binding subunit of AMP-activated protein kinase (AMPK), an energy sensor protein kinase that plays a key role in regulating cellular energy metabolism. In response to reduction of intracellular ATP levels, AMPK activates energy-producing pathways and inhibits energy-consuming processes: inhibits protein, carbohydrate and lipid biosynthesis, as well as cell growth and proliferation. AMPK acts via direct phosphorylation of metabolic enzymes, and by longer-term effects via phosphorylation of transcription regulators. Also acts as a regulator of cellular polarity by remodeling the actin cytoskeleton; probably by indirectly activating myosin. Gamma non-catalytic subunit mediates binding to AMP, ADP and ATP, leading to activate or inhibit AMPK: AMP-binding results in allosteric activation of alpha catalytic subunit (PRKAA1 or PRKAA2) both by inducing phosphorylation and preventing dephosphorylation of catalytic subunits. ADP also stimulates phosphorylation, without stimulating already phosphorylated catalytic subunit. ATP promotes dephosphorylation of catalytic subunit, rendering the AMPK enzyme inactive. In Bos taurus (Bovine), this protein is 5'-AMP-activated protein kinase subunit gamma-1 (PRKAG1).